The following is a 256-amino-acid chain: Pimeloyl-[acyl-carrier protein] methyl ester esterase (256 aa).

The region spanning 15-242 is the AB hydrolase-1 domain; the sequence is HLVLLHGWGL…AAHAPFISHP (228 aa). Residues Trp22, 82–83, and 143–147 each bind substrate; these read SL and FLALQ. Ser82 functions as the Nucleophile in the catalytic mechanism. Catalysis depends on residues Asp207 and His235. Position 235 (His235) interacts with substrate.

The protein belongs to the AB hydrolase superfamily. Carboxylesterase BioH family. As to quaternary structure, monomer.

The protein resides in the cytoplasm. The catalysed reaction is 6-carboxyhexanoyl-[ACP] methyl ester + H2O = 6-carboxyhexanoyl-[ACP] + methanol + H(+). It participates in cofactor biosynthesis; biotin biosynthesis. The physiological role of BioH is to remove the methyl group introduced by BioC when the pimeloyl moiety is complete. It allows to synthesize pimeloyl-ACP via the fatty acid synthetic pathway through the hydrolysis of the ester bonds of pimeloyl-ACP esters. This is Pimeloyl-[acyl-carrier protein] methyl ester esterase from Escherichia coli O6:K15:H31 (strain 536 / UPEC).